The chain runs to 114 residues: Large ribosomal subunit protein bL20c (114 aa).

Belongs to the bacterial ribosomal protein bL20 family.

The protein localises to the plastid. It is found in the chloroplast. Binds directly to 23S ribosomal RNA and is necessary for the in vitro assembly process of the 50S ribosomal subunit. It is not involved in the protein synthesizing functions of that subunit. The polypeptide is Large ribosomal subunit protein bL20c (rpl20) (Trieres chinensis (Marine centric diatom)).